Reading from the N-terminus, the 83-residue chain is Small ribosomal subunit protein bS16 (83 aa).

This sequence belongs to the bacterial ribosomal protein bS16 family.

In Shewanella amazonensis (strain ATCC BAA-1098 / SB2B), this protein is Small ribosomal subunit protein bS16.